Consider the following 1160-residue polypeptide: Major DNA-binding protein (1160 aa).

A Required for filament formation motif is present at residues 808 to 809 (FW). Residues 1139 to 1160 (ARGGEHAFDEDCGLLPAKRGRL) form a required for nuclear localization region.

It belongs to the herpesviridae major DNA-binding protein family. Homooligomers. Forms double-helical filaments necessary for the formation of replication compartments within the host nucleus. Interacts with the origin-binding protein. Interacts with the helicase primase complex; this interaction stimulates primer synthesis activity of the helicase-primase complex. Interacts with the DNA polymerase. Interacts with the alkaline exonuclease; this interaction increases its nuclease processivity.

The protein resides in the host nucleus. Single-stranded DNA-binding protein required for DNA replication. In terms of biological role, plays several crucial roles in viral infection. Participates in the opening of the viral DNA origin to initiate replication by interacting with the origin-binding protein. May disrupt loops, hairpins and other secondary structures present on ssDNA to reduce and eliminate pausing of viral DNA polymerase at specific sites during elongation. Promotes viral DNA recombination by performing strand-transfer, characterized by the ability to transfer a DNA strand from a linear duplex to a complementary single-stranded DNA circle. Can also catalyze the renaturation of complementary single strands. Additionally, reorganizes the host cell nucleus, leading to the formation of prereplicative sites and replication compartments. This process is driven by the protein which can form double-helical filaments in the absence of DNA. In Simian cytomegalovirus (strain Colburn), this protein is Major DNA-binding protein.